We begin with the raw amino-acid sequence, 471 residues long: Putative multidrug resistance protein MdtD (471 aa).

Over 1–11 the chain is Periplasmic; that stretch reads MTDLPDSTRWQ. The chain crosses the membrane as a helical span at residues 12–32; that stretch reads LWIVAFGFFMQSLDTTIVNTA. Residues 33-48 lie on the Cytoplasmic side of the membrane; sequence LPSMAQSLGESPLHMH. Residues 49-69 traverse the membrane as a helical segment; it reads MVIVSYVLTVAVMLPASGWLA. The Periplasmic portion of the chain corresponds to 70 to 76; sequence DKVGVRN. The helical transmembrane segment at 77–97 threads the bilayer; that stretch reads IFFTAIVLFTLGSLFCALSGT. At 98–101 the chain is on the cytoplasmic side; the sequence is LNEL. A helical membrane pass occupies residues 102–124; sequence LLARALQGVGGAMMVPVGRLTVM. Residues 125–137 lie on the Periplasmic side of the membrane; that stretch reads KIVPREQYMAAMT. A helical transmembrane segment spans residues 138–158; that stretch reads FVTLPGQVGPLLGPALGGLLV. The Cytoplasmic portion of the chain corresponds to 159 to 164; it reads EYASWH. A helical transmembrane segment spans residues 165 to 185; the sequence is WIFLINIPVGIIGAIATLMLM. The Periplasmic segment spans residues 186 to 196; it reads PNYTMQTRRFD. The chain crosses the membrane as a helical span at residues 197–217; that stretch reads LSGFLLLAVGMAVLTLALDGS. Topologically, residues 218–224 are cytoplasmic; sequence KGTGLSP. The helical transmembrane segment at 225–245 threads the bilayer; that stretch reads LAIAGLVAVGVVALVLYLLHA. Residues 246–262 lie on the Periplasmic side of the membrane; the sequence is RNNNRALFSLKLFRTRT. A helical membrane pass occupies residues 263–283; that stretch reads FSLGLAGSFAGRIGSGMLPFM. Over 284–285 the chain is Cytoplasmic; it reads TP. Residues 286-306 traverse the membrane as a helical segment; that stretch reads VFLQIGLGFSPFHAGLMMIPM. The Periplasmic portion of the chain corresponds to 307-341; the sequence is VLGSMGMKRIVVQVVNRFGYRRVLVATTLGLSLVT. The helical transmembrane segment at 342–362 threads the bilayer; the sequence is LLFMTTALLGWYYVLPFVLFL. Topologically, residues 363–395 are cytoplasmic; the sequence is QGMVNSTRFSSMNTLTLKDLPDNLASSGNSLLS. The chain crosses the membrane as a helical span at residues 396 to 416; it reads MIMQLSMSIGVTIAGLLLGLF. The Periplasmic portion of the chain corresponds to 417–430; it reads GSQHVSVDSGTTQT. Residues 431-451 traverse the membrane as a helical segment; it reads VFMYTWLSMAFIIALPAFIFA. At 452 to 471 the chain is on the cytoplasmic side; it reads RVPNDTHQNVAISRRKRSAQ.

It belongs to the major facilitator superfamily. TCR/Tet family.

Its subcellular location is the cell inner membrane. In Escherichia coli (strain SMS-3-5 / SECEC), this protein is Putative multidrug resistance protein MdtD.